A 588-amino-acid chain; its full sequence is Polyphenol oxidase II, chloroplastic (588 aa).

The segment covering 1–10 (MASFTTSPCT) has biased composition (polar residues). The interval 1–32 (MASFTTSPCTSAAPKTPKSLSSSATISSPLPK) is disordered. Residues 1-50 (MASFTTSPCTSAAPKTPKSLSSSATISSPLPKPSQIHIATAKRTHHFKVS) constitute a chloroplast transit peptide. Over residues 16 to 29 (TPKSLSSSATISSP) the composition is skewed to low complexity. Residues 51-88 (CNAPNGDSQPKLDRRDVLLGLGGLAGAASLINNPLAFA) constitute a thylakoid transit peptide. Cystine bridges form between Cys-99–Cys-116 and Cys-115–Cys-179. Positions 178, 199, 208, 330, 334, and 366 each coordinate Cu cation. The segment at residues 182 to 199 (CNGGYVQTDYPDKEIQVH) is a cross-link (2'-(S-cysteinyl)-histidine (Cys-His)).

This sequence belongs to the tyrosinase family. In terms of assembly, monomer. Cu(2+) is required as a cofactor.

It localises to the plastid. It is found in the chloroplast thylakoid lumen. The enzyme catalyses 2 catechol + O2 = 2 1,2-benzoquinone + 2 H2O. Its function is as follows. Catalyzes the oxidation of mono- and o-diphenols to o-diquinones. The polypeptide is Polyphenol oxidase II, chloroplastic (co-2) (Ipomoea batatas (Sweet potato)).